Consider the following 320-residue polypeptide: Malate dehydrogenase (320 aa).

Residues 10–15 (GSGMIG) and Asp-34 each bind NAD(+). The substrate site is built by Arg-83 and Arg-89. Residues Asn-96 and 119–121 (ITN) contribute to the NAD(+) site. Substrate-binding residues include Asn-121 and Arg-152. Residue His-176 is the Proton acceptor of the active site.

Belongs to the LDH/MDH superfamily. MDH type 3 family.

The catalysed reaction is (S)-malate + NAD(+) = oxaloacetate + NADH + H(+). Functionally, catalyzes the reversible oxidation of malate to oxaloacetate. The chain is Malate dehydrogenase from Hyphomonas neptunium (strain ATCC 15444).